The sequence spans 407 residues: Imidazolonepropionase (407 aa).

Histidine 75 and histidine 77 together coordinate Fe(3+). The Zn(2+) site is built by histidine 75 and histidine 77. The 4-imidazolone-5-propanoate site is built by arginine 84, tyrosine 142, and histidine 169. Tyrosine 142 serves as a coordination point for N-formimidoyl-L-glutamate. Histidine 232 is a Fe(3+) binding site. Residue histidine 232 participates in Zn(2+) binding. Glutamine 235 contacts 4-imidazolone-5-propanoate. A Fe(3+)-binding site is contributed by aspartate 306. Zn(2+) is bound at residue aspartate 306. Positions 308 and 310 each coordinate N-formimidoyl-L-glutamate. Residue threonine 311 coordinates 4-imidazolone-5-propanoate.

Belongs to the metallo-dependent hydrolases superfamily. HutI family. The cofactor is Zn(2+). Fe(3+) is required as a cofactor.

It localises to the cytoplasm. The catalysed reaction is 4-imidazolone-5-propanoate + H2O = N-formimidoyl-L-glutamate. Its pathway is amino-acid degradation; L-histidine degradation into L-glutamate; N-formimidoyl-L-glutamate from L-histidine: step 3/3. Catalyzes the hydrolytic cleavage of the carbon-nitrogen bond in imidazolone-5-propanoate to yield N-formimidoyl-L-glutamate. It is the third step in the universal histidine degradation pathway. This chain is Imidazolonepropionase, found in Rhodococcus jostii (strain RHA1).